Here is an 88-residue protein sequence, read N- to C-terminus: Small ribosomal subunit protein uS15c (88 aa).

Belongs to the universal ribosomal protein uS15 family. In terms of assembly, part of the 30S ribosomal subunit.

The protein resides in the plastid. The protein localises to the chloroplast. This Pinus thunbergii (Japanese black pine) protein is Small ribosomal subunit protein uS15c (rps15).